We begin with the raw amino-acid sequence, 90 residues long: Small ribosomal subunit protein bS20 (90 aa).

It belongs to the bacterial ribosomal protein bS20 family.

Functionally, binds directly to 16S ribosomal RNA. This chain is Small ribosomal subunit protein bS20, found in Mesomycoplasma hyopneumoniae (strain J / ATCC 25934 / NCTC 10110) (Mycoplasma hyopneumoniae).